The primary structure comprises 551 residues: Interferon-induced, double-stranded RNA-activated protein kinase (551 aa).

A2 is modified (N-acetylalanine). The tract at residues 2–180 is (Microbial infection) Interaction with HCV NS5A; it reads AGDLSAGFFM…SVKSDYLSSG (179 aa). In terms of domain architecture, DRBM 1 spans 9-77; sequence FFMEELNTYR…AKLAVEILNK (69 aa). A Glycyl lysine isopeptide (Lys-Gly) (interchain with G-Cter in ISG15) cross-link involves residue K69. A Phosphoserine modification is found at S83. Phosphothreonine; by autocatalysis is present on residues T88, T89, and T90. Residues 100 to 167 form the DRBM 2 domain; the sequence is NYIGLINRIA…AKLAYLQILS (68 aa). The residue at position 101 (Y101) is a Phosphotyrosine; by autocatalysis. Residue K159 forms a Glycyl lysine isopeptide (Lys-Gly) (interchain with G-Cter in ISG15) linkage. Residue Y162 is modified to Phosphotyrosine; by autocatalysis. Over residues 202–215 the composition is skewed to polar residues; that stretch reads SSSEGDFSADTSEI. The disordered stretch occupies residues 202–222; it reads SSSEGDFSADTSEINSNSDSL. S242 is subject to Phosphoserine; by autocatalysis. Residues T255 and T258 each carry the phosphothreonine; by autocatalysis modification. Residues 266–362 form a dimerization region; sequence DFKEIELIGS…NSSRSKTKCL (97 aa). The interaction with TRAF5 stretch occupies residues 266 to 551; it reads DFKEIELIGS…SPEKNERHTC (286 aa). Residues 267 to 538 enclose the Protein kinase domain; that stretch reads FKEIELIGSG…TSEILRTLTV (272 aa). 273 to 281 serves as a coordination point for ATP; it reads IGSGGFGQV. Position 293 is a phosphotyrosine; by autocatalysis (Y293). K296 is a binding site for ATP. 2 repeat units span residues 331-343 and 345-357. The tract at residues 331–357 is 2 X 13 AA approximate repeats; that stretch reads DYDPETSDDSLESSDYDPENSKNSSRS. Positions 379–496 are interaction with EIF2S1/EIF-2ALPHA; it reads EKRRGEKLDK…TAFETSKFFT (118 aa). D414 serves as the catalytic Proton acceptor. D432 contacts Mg(2+). Phosphothreonine; by autocatalysis is present on residues T446 and T451. 2 positions are modified to phosphoserine: S456 and S542.

The protein belongs to the protein kinase superfamily. Ser/Thr protein kinase family. GCN2 subfamily. As to quaternary structure, homodimer. Interacts with STRBP. Interacts with DNAJC3. Forms a complex with FANCA, FANCC, FANCG and HSP70. Interacts with ADAR/ADAR1. Interacts with IRS1. The inactive form interacts with NCK1 and GSN. Interacts (via the kinase catalytic domain) with STAT3 (via SH2 domain), TRAF2 (C-terminus), TRAF5 (C-terminus) and TRAF6 (C-terminus). Interacts with MAP2K6, IKBKB/IKKB, NPM1, TARBP2, NLRP1, NLRP3, NLRC4 and AIM2. Interacts (via DRBM 1 domain) with DUS2L (via DRBM domain). Interacts with DHX9 (via N-terminus) and this interaction is dependent upon activation of the kinase. Interacts with EIF2S1/EIF-2ALPHA; this interaction induces a conformational change in EIF2S1 and its phosphorylation by EIF2AK2. In terms of assembly, (Microbial infection) Interacts with human cytomegalovirus (HCMV) TRS1; this interaction retains EIF2AK2 to the nucleus and prevents its activation. (Microbial infection) Interacts with vaccinia virus protein K3 (K3L); this interaction inhibits EIF2AK2. As to quaternary structure, (Microbial infection) Interacts with human herpes simplex virus 1 (HHV-1) protein US11 in an RNA-dependent manner. In terms of assembly, (Microbial infection) The inactive form interacts with Toscana virus (TOS) NSS. (Microbial infection) Interacts with herpes virus 8 protein v-IRF2; this interaction inhibits EIF2AK2 activation. As to quaternary structure, (Microbial infection) Interacts with vaccinia protein E3. In terms of assembly, (Microbial infection) Interacts (via N-terminus) with Hepatitis C virus (HCV) mature core protein (via N-terminus); this interaction induces the autophosphorylation of EIF2AK2. (Microbial infection) Interacts with Hepatitis C virus (HCV) non-structural protein 5A (NS5A); this interaction leads to disruption of EIF2AK2 dimerization by NS5A. As to quaternary structure, (Microbial infection) Interacts with Hepatitis C virus (HCV) envelope glycoprotein E2; this interaction inhibits EIF2AK2 and blocks its inhibitory effect on protein synthesis and cell growth. In terms of assembly, (Microbial infection) Interacts with human respiratory syncytial virus (HRSV) nucleoprotein; this interaction inhibits EIF2AK2 phosphorylation of EIF2S1 and blocks EIF2AK2-mediated translation shutoff. (Microbial infection) Interacts with human herpesvirus 8 protein MTA/ORF57; this interaction inhibits stress granule formation. The cofactor is Mg(2+). Autophosphorylated on several Ser, Thr and Tyr residues. Autophosphorylation of Thr-451 is dependent on Thr-446 and is stimulated by dsRNA binding and dimerization. Autophosphorylation apparently leads to the activation of the kinase. Tyrosine autophosphorylation is essential for efficient dsRNA-binding, dimerization, and kinase activation. In terms of tissue distribution, highly expressed in thymus, spleen and bone marrow compared to non-hematopoietic tissues such as small intestine, liver, or kidney tissues. Colocalizes with GSK3B and TAU in the Alzheimer disease (AD) brain. Elevated levels seen in breast and colon carcinomas, and which correlates with tumor progression and invasiveness or risk of progression.

It localises to the cytoplasm. The protein resides in the nucleus. Its subcellular location is the perinuclear region. It catalyses the reaction L-seryl-[protein] + ATP = O-phospho-L-seryl-[protein] + ADP + H(+). The enzyme catalyses L-threonyl-[protein] + ATP = O-phospho-L-threonyl-[protein] + ADP + H(+). The catalysed reaction is L-tyrosyl-[protein] + ATP = O-phospho-L-tyrosyl-[protein] + ADP + H(+). Its activity is regulated as follows. Initially produced in an inactive form and is activated by binding to viral dsRNA, which causes dimerization and autophosphorylation in the activation loop and stimulation of function. ISGylation can activate it in the absence of viral infection. Can also be activated by heparin, pro-inflammatory stimuli, growth factors, cytokines, oxidative stress and the cellular protein PRKRA. Activity is markedly stimulated by manganese ions. Activation is blocked by the viral components HIV-1 Tat protein and large amounts of HIV-1 trans-activation response (TAR) RNA element as well as by the cellular proteins TARBP2, DUS2L, NPM1, NCK1 and ADAR. Down-regulated by Toscana virus (TOS) and Rift valley fever virus (RVFV) NSS which promote its proteasomal degradation. Inhibited by vaccinia virus protein E3, probably via dsRNA sequestering. IFN-induced dsRNA-dependent serine/threonine-protein kinase that phosphorylates the alpha subunit of eukaryotic translation initiation factor 2 (EIF2S1/eIF-2-alpha) and plays a key role in the innate immune response to viral infection. Inhibits viral replication via the integrated stress response (ISR): EIF2S1/eIF-2-alpha phosphorylation in response to viral infection converts EIF2S1/eIF-2-alpha in a global protein synthesis inhibitor, resulting to a shutdown of cellular and viral protein synthesis, while concomitantly initiating the preferential translation of ISR-specific mRNAs, such as the transcriptional activator ATF4. Exerts its antiviral activity on a wide range of DNA and RNA viruses including hepatitis C virus (HCV), hepatitis B virus (HBV), measles virus (MV) and herpes simplex virus 1 (HHV-1). Also involved in the regulation of signal transduction, apoptosis, cell proliferation and differentiation: phosphorylates other substrates including p53/TP53, PPP2R5A, DHX9, ILF3, IRS1 and the HHV-1 viral protein US11. In addition to serine/threonine-protein kinase activity, also has tyrosine-protein kinase activity and phosphorylates CDK1 at 'Tyr-4' upon DNA damage, facilitating its ubiquitination and proteasomal degradation. Either as an adapter protein and/or via its kinase activity, can regulate various signaling pathways (p38 MAP kinase, NF-kappa-B and insulin signaling pathways) and transcription factors (JUN, STAT1, STAT3, IRF1, ATF3) involved in the expression of genes encoding pro-inflammatory cytokines and IFNs. Activates the NF-kappa-B pathway via interaction with IKBKB and TRAF family of proteins and activates the p38 MAP kinase pathway via interaction with MAP2K6. Can act as both a positive and negative regulator of the insulin signaling pathway (ISP). Negatively regulates ISP by inducing the inhibitory phosphorylation of insulin receptor substrate 1 (IRS1) at 'Ser-312' and positively regulates ISP via phosphorylation of PPP2R5A which activates FOXO1, which in turn up-regulates the expression of insulin receptor substrate 2 (IRS2). Can regulate NLRP3 inflammasome assembly and the activation of NLRP3, NLRP1, AIM2 and NLRC4 inflammasomes. Plays a role in the regulation of the cytoskeleton by binding to gelsolin (GSN), sequestering the protein in an inactive conformation away from actin. This Homo sapiens (Human) protein is Interferon-induced, double-stranded RNA-activated protein kinase (EIF2AK2).